The following is a 159-amino-acid chain: 17 kDa surface antigen (159 aa).

Positions 1 to 19 (MKLLSKIMIIALAASMLQA) are cleaved as a signal peptide. Cysteine 20 carries the N-palmitoyl cysteine lipid modification. Cysteine 20 carries the S-diacylglycerol cysteine lipid modification.

The protein belongs to the rickettsiale 17 kDa surface antigen family.

It is found in the cell outer membrane. This is 17 kDa surface antigen (omp) from Rickettsia prowazekii (strain Madrid E).